The chain runs to 129 residues: uncharacterized protein (129 aa).

Over residues 1 to 13 (MSDVAETVVAQEP) the composition is skewed to low complexity. Residues 1-129 (MSDVAETVVA…SGDAPAVAAE (129 aa)) form a disordered region. The segment covering 34 to 94 (IDEKTSEQNG…KRVSSAHEEA (61 aa)) has biased composition (basic and acidic residues). The segment covering 117–129 (VAASGDAPAVAAE) has biased composition (low complexity).

This is an uncharacterized protein from Caenorhabditis elegans.